Consider the following 187-residue polypeptide: Urease accessory protein UreE (187 aa).

Residues 154-187 (RANSAQGHGHSHGHSHSHDHHGYHHHGDGNWHKH) form a disordered region. Positions 162-177 (GHSHGHSHSHDHHGYH) are enriched in basic residues. The span at 178-187 (HHGDGNWHKH) shows a compositional bias: basic and acidic residues.

The protein belongs to the UreE family.

It is found in the cytoplasm. Its function is as follows. Involved in urease metallocenter assembly. Binds nickel. Probably functions as a nickel donor during metallocenter assembly. The polypeptide is Urease accessory protein UreE (Actinobacillus pleuropneumoniae (Haemophilus pleuropneumoniae)).